Here is a 201-residue protein sequence, read N- to C-terminus: Female-specific protein transformer (201 aa).

The disordered stretch occupies residues 1-117 (MDADSSSRSP…RSRSRSRTPR (117 aa)). Residues 9-37 (SPRDTRTCARPKEKVPYFADEGRERDRVR) show a composition bias toward basic and acidic residues. Composition is skewed to basic residues over residues 38–62 (NLRH…RARS) and 99–115 (KQRR…RSRT).

The protein resides in the nucleus speckle. Its function is as follows. Member of the regulatory pathway controlling female somatic sexual differentiation, regulated by Sxl. Activates dsx female-specific splicing by promoting the formation of a splicing enhancer complex which consists of tra, tra2 and sr proteins. The polypeptide is Female-specific protein transformer (tra) (Drosophila hydei (Fruit fly)).